Consider the following 455-residue polypeptide: Argininosuccinate lyase (455 aa).

The protein belongs to the lyase 1 family. Argininosuccinate lyase subfamily.

The protein localises to the cytoplasm. It carries out the reaction 2-(N(omega)-L-arginino)succinate = fumarate + L-arginine. It participates in amino-acid biosynthesis; L-arginine biosynthesis; L-arginine from L-ornithine and carbamoyl phosphate: step 3/3. The protein is Argininosuccinate lyase of Shewanella denitrificans (strain OS217 / ATCC BAA-1090 / DSM 15013).